A 97-amino-acid chain; its full sequence is Large ribosomal subunit protein eL21 (97 aa).

The protein belongs to the eukaryotic ribosomal protein eL21 family.

The protein is Large ribosomal subunit protein eL21 of Methanococcoides burtonii (strain DSM 6242 / NBRC 107633 / OCM 468 / ACE-M).